A 175-amino-acid polypeptide reads, in one-letter code: Bcl-2-related protein A1 (175 aa).

The protein belongs to the Bcl-2 family. In terms of assembly, interacts directly with BCL2L11/BIM, BAK1, BID, BMF and BBC3. Interacts directly with PMAIP1. Interacts with BOP. Interacts with ING4. Interacts with UBQLN4.

It is found in the cytoplasm. Its function is as follows. Retards apoptosis induced by IL-3 deprivation. May function in the response of hemopoietic cells to external signals and in maintaining endothelial survival during infection. Can inhibit apoptosis induced by serum starvation in the mammary epithelial cell line HC11. This is Bcl-2-related protein A1 (BCL2A1) from Bos taurus (Bovine).